Reading from the N-terminus, the 126-residue chain is Holo-[acyl-carrier-protein] synthase (126 aa).

Mg(2+)-binding residues include aspartate 9 and glutamate 58.

The protein belongs to the P-Pant transferase superfamily. AcpS family. It depends on Mg(2+) as a cofactor.

It localises to the cytoplasm. It catalyses the reaction apo-[ACP] + CoA = holo-[ACP] + adenosine 3',5'-bisphosphate + H(+). Its function is as follows. Transfers the 4'-phosphopantetheine moiety from coenzyme A to a Ser of acyl-carrier-protein. The polypeptide is Holo-[acyl-carrier-protein] synthase (Salmonella agona (strain SL483)).